A 400-amino-acid polypeptide reads, in one-letter code: Cell division protein FtsZ 2 (400 aa).

Residues 1–16 (MQDIVREAMERDEAER) show a composition bias toward basic and acidic residues. A disordered region spans residues 1-30 (MQDIVREAMERDEAERQTQSSLEDSDDQFG). Residues 41–45 (GAGNN), 128–130 (GTG), Glu159, Arg162, and Asp205 contribute to the GTP site. A disordered region spans residues 338 to 400 (VLGPSTQKQA…EKNNGLDVIR (63 aa)). A compositionally biased stretch (low complexity) spans 352-364 (QSIQSRESQQQHS). Residues 365 to 382 (GSEFDSSERAQTAQSGTW) are compositionally biased toward polar residues. Over residues 385 to 400 (GGRDEVEKNNGLDVIR) the composition is skewed to basic and acidic residues.

This sequence belongs to the FtsZ family. As to quaternary structure, homodimer. Polymerizes to form a dynamic ring structure in a strictly GTP-dependent manner. Interacts directly with several other division proteins. Interacts with SepF.

The protein localises to the cytoplasm. Essential cell division protein that forms a contractile ring structure (Z ring) at the future cell division site. The regulation of the ring assembly controls the timing and the location of cell division. One of the functions of the FtsZ ring is to recruit other cell division proteins to the septum to produce a new cell wall between the dividing cells. Binds GTP and shows GTPase activity. Required for division ring constriction. This Haloferax volcanii (strain ATCC 29605 / DSM 3757 / JCM 8879 / NBRC 14742 / NCIMB 2012 / VKM B-1768 / DS2) (Halobacterium volcanii) protein is Cell division protein FtsZ 2.